We begin with the raw amino-acid sequence, 216 residues long: Nucleoid occlusion factor SlmA (216 aa).

The interval 1–23 (MAEQLTLDSIEPEPEKQSAKIEK) is disordered. The segment covering 13 to 23 (EPEKQSAKIEK) has biased composition (basic and acidic residues). An HTH tetR-type domain is found at 28 to 88 (ERRQQVLTVL…ALIENIESSL (61 aa)). A DNA-binding region (H-T-H motif) is located at residues 51–70 (TTARLAKEVGVSEAALYRYF).

Belongs to the nucleoid occlusion factor SlmA family. In terms of assembly, homodimer. Interacts with FtsZ.

The protein resides in the cytoplasm. Its subcellular location is the nucleoid. Functionally, required for nucleoid occlusion (NO) phenomenon, which prevents Z-ring formation and cell division over the nucleoid. Acts as a DNA-associated cell division inhibitor that binds simultaneously chromosomal DNA and FtsZ, and disrupts the assembly of FtsZ polymers. SlmA-DNA-binding sequences (SBS) are dispersed on non-Ter regions of the chromosome, preventing FtsZ polymerization at these regions. The protein is Nucleoid occlusion factor SlmA of Mannheimia succiniciproducens (strain KCTC 0769BP / MBEL55E).